We begin with the raw amino-acid sequence, 97 residues long: Na(+)/H(+) antiporter subunit F1 (97 aa).

A run of 3 helical transmembrane segments spans residues 3–23, 35–55, and 60–80; these read FKIFIITALIIVVLSMLAMLI, VVALDAIGLQLMAVIALFSIL, and YMLVVILMVGILAFLGTAVFS.

This sequence belongs to the CPA3 antiporters (TC 2.A.63) subunit F family. As to quaternary structure, may form a heterooligomeric complex that consists of seven subunits: mnhA1, mnhB1, mnhC1, mnhD1, mnhE1, mnhF1 and mnhG1.

The protein resides in the cell membrane. Mnh complex is a Na(+)/H(+) antiporter involved in Na(+) excretion. In Staphylococcus epidermidis (strain ATCC 35984 / DSM 28319 / BCRC 17069 / CCUG 31568 / BM 3577 / RP62A), this protein is Na(+)/H(+) antiporter subunit F1 (mnhF1).